Consider the following 1684-residue polypeptide: Latrophilin Cirl (1684 aa).

Residues 1 to 765 are Extracellular-facing; it reads MASNNYIQIM…LFTMFDGNMR (765 aa). An SUEL-type lectin domain is found at 21–110; that stretch reads ACEGKKLTIE…KYLEAHYQCV (90 aa). N-linked (GlcNAc...) asparagine glycans are attached at residues asparagine 138, asparagine 251, asparagine 297, and asparagine 336. The interval 181 to 300 is disordered; the sequence is PPATHATPPG…GPSVSSNGSA (120 aa). Composition is skewed to polar residues over residues 250 to 260 and 278 to 300; these read SNATAPSNTRI and KSSP…NGSA. Residues 370–391 form a disordered region; sequence SFDEDDEEMAGTSTTTPMSTSS. Residues 381–391 show a composition bias toward low complexity; it reads TSTTTPMSTSS. Residues asparagine 396, asparagine 653, asparagine 701, and asparagine 728 are each glycosylated (N-linked (GlcNAc...) asparagine). Residues 559-752 form the GAIN-B domain; sequence RSVVQKVKNI…AILMDVVDEH (194 aa). 2 disulfide bridges follow: cysteine 707/cysteine 734 and cysteine 722/cysteine 736. Residues 707-752 form a GPS region; sequence CVFWNYIDHAWSANGCSLESTNRTHSVCSCNHLTNFAILMDVVDEH. A helical membrane pass occupies residues 766-786; sequence IFIYISIAICVVFIVIALLTL. The Cytoplasmic segment spans residues 787 to 799; that stretch reads KLFNGVFVKSART. The helical transmembrane segment at 800 to 820 threads the bilayer; that stretch reads SIYINIYICLLAIELLFLLGI. Topologically, residues 821-826 are extracellular; the sequence is EQTETS. Residues 827-847 traverse the membrane as a helical segment; that stretch reads IFCGFITVFLHCAILSGTSWF. The Cytoplasmic segment spans residues 848 to 873; the sequence is CYEAFHSYSTLTSDELLLEVDQTPKV. The chain crosses the membrane as a helical span at residues 874–894; it reads NCYYLLSYGLSLSVVAISLVI. The Extracellular segment spans residues 895–918; the sequence is NPSTYTQNDYCVLMEANAVFYATF. Residues 919–939 form a helical membrane-spanning segment; the sequence is VAPVLIFFMAAIGYTFLSWII. Over 940-966 the chain is Cytoplasmic; it reads MCRKSRTGLKTKEHTRLATVRFDIRCS. Residues 967 to 987 form a helical membrane-spanning segment; that stretch reads FVFFLLLSAVWCSAYFYLRGA. Over 988–994 the chain is Extracellular; that stretch reads KMDEDVT. Residues 995–1015 traverse the membrane as a helical segment; the sequence is GIYGYNFICFNTLLGLYIFVF. The Cytoplasmic segment spans residues 1016 to 1684; it reads HCIQNEKIRR…VRCYLEPLAK (669 aa). The interval 1080 to 1100 is disordered; it reads PLGTNDDAHDEQQQQQHMSAT. Serine 1156, serine 1247, and serine 1254 each carry phosphoserine. Disordered regions lie at residues 1228–1255, 1270–1353, 1441–1520, and 1587–1669; these read KPNS…LHSR, KTKP…APPP, SRYG…LPPQ, and SMRG…SAML. Residues 1298 to 1314 are compositionally biased toward low complexity; the sequence is QQQQQLRQQRQQQQQQL. Residues serine 1315 and serine 1316 each carry the phosphoserine modification. Over residues 1328-1348 the composition is skewed to low complexity; that stretch reads LHLQHQQQQQQQRRAGGQQQL. The span at 1455-1466 shows a compositional bias: polar residues; it reads RNQQQQQHSLAQ. 2 stretches are compositionally biased toward acidic residues: residues 1476 to 1489 and 1499 to 1512; these read DEDD…EETT and CDEE…DMED. The span at 1631-1654 shows a compositional bias: low complexity; it reads QQLQKLSPQSTTSSSSHTSHSNPH.

It belongs to the G-protein coupled receptor 2 family. LN-TM7 subfamily. In terms of assembly, forms a heterodimer, consisting of a large extracellular region non-covalently linked to a seven-transmembrane moiety. In terms of processing, proteolytically cleaved into 2 subunits, an extracellular subunit and a seven-transmembrane subunit.

It is found in the cell membrane. In Drosophila persimilis (Fruit fly), this protein is Latrophilin Cirl.